The chain runs to 425 residues: Histidine--tRNA ligase 2 (425 aa).

It belongs to the class-II aminoacyl-tRNA synthetase family. As to quaternary structure, homodimer.

The protein resides in the cytoplasm. The catalysed reaction is tRNA(His) + L-histidine + ATP = L-histidyl-tRNA(His) + AMP + diphosphate + H(+). The polypeptide is Histidine--tRNA ligase 2 (Shouchella clausii (strain KSM-K16) (Alkalihalobacillus clausii)).